A 448-amino-acid polypeptide reads, in one-letter code: Probable D-serine dehydratase (448 aa).

Lys111 is modified (N6-(pyridoxal phosphate)lysine).

Belongs to the serine/threonine dehydratase family. DsdA subfamily. The cofactor is pyridoxal 5'-phosphate.

The catalysed reaction is D-serine = pyruvate + NH4(+). This Rhizobium etli (strain CIAT 652) protein is Probable D-serine dehydratase.